The primary structure comprises 805 residues: Phenylalanine--tRNA ligase beta subunit (805 aa).

The tRNA-binding domain maps to 39 to 148 (APPFTGVVVT…AALRPGTDIR (110 aa)). The B5 domain occupies 399 to 474 (PVREPVRMRL…RVYGFERIPD (76 aa)). Positions 452, 458, 461, and 462 each coordinate Mg(2+). The 102-residue stretch at 703 to 804 (SRQPVVVRDL…LVAAHNARQR (102 aa)) folds into the FDX-ACB domain.

The protein belongs to the phenylalanyl-tRNA synthetase beta subunit family. Type 1 subfamily. In terms of assembly, tetramer of two alpha and two beta subunits. Mg(2+) is required as a cofactor.

It is found in the cytoplasm. It carries out the reaction tRNA(Phe) + L-phenylalanine + ATP = L-phenylalanyl-tRNA(Phe) + AMP + diphosphate + H(+). The polypeptide is Phenylalanine--tRNA ligase beta subunit (Bordetella pertussis (strain Tohama I / ATCC BAA-589 / NCTC 13251)).